Here is a 441-residue protein sequence, read N- to C-terminus: Glutamate--tRNA ligase 1 (441 aa).

The 'HIGH' region signature appears at 9 to 19 (PSPTGFIHVGN). The 'KMSKS' region motif lies at 239 to 243 (ALSKR). K242 serves as a coordination point for ATP.

It belongs to the class-I aminoacyl-tRNA synthetase family. Glutamate--tRNA ligase type 1 subfamily. In terms of assembly, monomer.

It localises to the cytoplasm. It catalyses the reaction tRNA(Glu) + L-glutamate + ATP = L-glutamyl-tRNA(Glu) + AMP + diphosphate. Catalyzes the attachment of glutamate to tRNA(Glu) in a two-step reaction: glutamate is first activated by ATP to form Glu-AMP and then transferred to the acceptor end of tRNA(Glu). This is Glutamate--tRNA ligase 1 from Cereibacter sphaeroides (strain ATCC 17025 / ATH 2.4.3) (Rhodobacter sphaeroides).